The primary structure comprises 58 residues: Metallothionein-2B (58 aa).

Positions 1 to 29 (MPDPCCNDKCECKEGECKTGCKCKSCRCP) are beta. Positions 5, 6, 10, 12, 17, 21, 23, 26, 28, 31, 34, 38, 40, 46, 50, 54, 56, and 57 each coordinate a divalent metal cation. Positions 30 to 58 (PCDKCSSECKCTSKEECSKTCSKPCSCCP) are alpha.

Belongs to the metallothionein superfamily. Type 3 family.

In terms of biological role, binds six divalent metal ions. Known to bind copper and cadmium. This chain is Metallothionein-2B, found in Callinectes sapidus (Blue crab).